Here is a 248-residue protein sequence, read N- to C-terminus: Functional amyloid sbunit FapE (248 aa).

Residues M1–A20 form the signal peptide.

The protein belongs to the FapE family. In terms of assembly, a minor component of purified amyloid fibrils. Fibrils are resistant to boiling in 2% (weight/vol) SDS and require &gt;90% (vol/vol) formic acid to dissolve.

The protein resides in the fimbrium. It is found in the secreted. A minor component of the functional amyloid in this bacterium. Upon overexpression of the endogenous six-gene locus (fapA-fapF) in situ, cells form large clumps during liquid growth, make large amounts of biofilm and produce amyloid fibrils. Expression of the 6 gene operon in E.coli strain BL21(DE3) induces flocculation and biofilm formation with copious extracellular fibrils. In Pseudomonas fluorescens, this protein is Functional amyloid sbunit FapE.